We begin with the raw amino-acid sequence, 217 residues long: DNA helicase assembly protein (217 aa).

The protein belongs to the Tequatrovirus DNA helicase assembly protein family. In terms of assembly, monomer. Homohexamer; when associated with DNA. Interacts (via C-terminus) with the DnaB-like replicative helicase (via C-terminus); this interaction brings about the rapid assembly of the helicase onto ssDNA. Interacts (via C-terminus) with the single-stranded DNA-binding protein; a ternary complex between the helicase assembly protein, the single-stranded DNA-binding protein and ssDNA is an obligatory intermediate in the helicase loading mechanism. Interacts with the viral DNA polymerase. Binds to single and double-stranded DNA. Part of the replicase complex that includes the DNA polymerase, the polymerase clamp, the clamp loader complex, the single-stranded DNA binding protein (SSB), the primase, the DnaB-like replicative helicase and the helicase assembly factor.

DNA helicase loader protein that participates in viral DNA replication, recombination, and repair. At the fork, required for loading of the replicative helicase onto DNA protected by the ssDNA-binding protein. Coordinates simultaneous synthesis of leading- and lagging-strands. This chain is DNA helicase assembly protein, found in Enterobacteria phage T4 (Bacteriophage T4).